Here is an 813-residue protein sequence, read N- to C-terminus: G-type lectin S-receptor-like serine/threonine-protein kinase LECRK1 (813 aa).

The signal sequence occupies residues 1–19 (MVALLLFPMLLQLLSPTCA). The Extracellular portion of the chain corresponds to 20-466 (QTQKNITLGS…NRKHWVLGSS (447 aa)). The Bulb-type lectin domain maps to 22–149 (QKNITLGSTL…DGTTKWQTFD (128 aa)). Residues N24, N57, N164, N168, N219, and N242 are each glycosylated (N-linked (GlcNAc...) asparagine). Residues 293–346 (PQNICHAIVSDVGSGVCGFNSYCTFDGTRNQIASCQCPPWYKFFDEQKKYKGCK) form the EGF-like; atypical domain. 5 disulfides stabilise this stretch: C297-C315, C309-C327, C329-C345, C391-C413, and C395-C401. The 80-residue stretch at 354 to 433 (CDLDEATALA…NMADYVQRTV (80 aa)) folds into the PAN domain. N-linked (GlcNAc...) asparagine glycans are attached at residues N407 and N441. Residues 467-487 (LILGTSILVNFALISIFLFGT) form a helical membrane-spanning segment. At 488–813 (YCRIATKKNI…DPCSFISSLP (326 aa)) the chain is on the cytoplasmic side. The region spanning 523-797 (AGFHEILGAG…KVTQMLDGAV (275 aa)) is the Protein kinase domain. ATP-binding positions include 529–537 (LGAGASGVV) and K553. D647 (proton acceptor) is an active-site residue.

The protein belongs to the protein kinase superfamily. Ser/Thr protein kinase family.

Its subcellular location is the membrane. The enzyme catalyses L-seryl-[protein] + ATP = O-phospho-L-seryl-[protein] + ADP + H(+). It catalyses the reaction L-threonyl-[protein] + ATP = O-phospho-L-threonyl-[protein] + ADP + H(+). Its function is as follows. Involved in innate immunity. Required for the expression of defense-related genes PR1A, LOX2 and CHS1 upon biotic stresses. Required for basal resistance to the fungal blast (M.grisea), bacterial blight (X.oryzae pv. oryzae, Xoo) and the herbivorous insect brown planthopper (N.lugens, BPH). May be involved in several defense signaling pathways. Involved in the promotion of seed germination. Required for the expression of alpha-amylase genes during seed germination. Involved in resistance against the herbivorous insect brown planthopper (N.lugens, BPH). Member of the BPH3 (BPH resistance locus 3) cluster which contains LECRK1, LECRK2 and LECRK3. The chain is G-type lectin S-receptor-like serine/threonine-protein kinase LECRK1 from Oryza sativa subsp. japonica (Rice).